Reading from the N-terminus, the 274-residue chain is Penicillin-insensitive murein endopeptidase (274 aa).

The signal sequence occupies residues 1-19 (MKKTVIALLAWFVSSASLA). 3 cysteine pairs are disulfide-bonded: cysteine 44-cysteine 265, cysteine 187-cysteine 235, and cysteine 216-cysteine 223. The Zn(2+) site is built by histidine 110, histidine 113, aspartate 120, aspartate 147, histidine 150, and histidine 211. A disordered region spans residues 225–274 (DQPLPPPGDGCGAELQSWFEPPKPGTTKPEKKTPPPLPPSCQALLDEHVL).

The protein belongs to the peptidase M74 family. As to quaternary structure, dimer. Zn(2+) serves as cofactor.

It is found in the periplasm. Its function is as follows. Murein endopeptidase that cleaves the D-alanyl-meso-2,6-diamino-pimelyl amide bond that connects peptidoglycan strands. Likely plays a role in the removal of murein from the sacculus. The chain is Penicillin-insensitive murein endopeptidase from Salmonella paratyphi C (strain RKS4594).